The following is a 350-amino-acid chain: Small ribosomal subunit protein uS3 (350 aa).

The region spanning 38–106 (IRKMMSRGME…QVQLNILEVK (69 aa)) is the KH type-2 domain. A disordered region spans residues 211–350 (AEREAQEALQ…TPGTPEKAEE (140 aa)). Basic residues predominate over residues 222-232 (QTRRDRPRRGP). Low complexity predominate over residues 261–350 (NAPAAETAAS…TPGTPEKAEE (90 aa)).

It belongs to the universal ribosomal protein uS3 family. Part of the 30S ribosomal subunit. Forms a tight complex with proteins S10 and S14.

Binds the lower part of the 30S subunit head. Binds mRNA in the 70S ribosome, positioning it for translation. This Frankia alni (strain DSM 45986 / CECT 9034 / ACN14a) protein is Small ribosomal subunit protein uS3.